A 657-amino-acid chain; its full sequence is Glycogen debranching enzyme (657 aa).

Asp-336 serves as the catalytic Nucleophile. The active-site Proton donor is Glu-371. The interval 460–479 is disordered; sequence ANGEENRDGTNNNYSNNHGK.

This sequence belongs to the glycosyl hydrolase 13 family.

The catalysed reaction is Hydrolysis of (1-&gt;6)-alpha-D-glucosidic linkages to branches with degrees of polymerization of three or four glucose residues in limit dextrin.. Its pathway is glycan degradation; glycogen degradation. Its function is as follows. Removes maltotriose and maltotetraose chains that are attached by 1,6-alpha-linkage to the limit dextrin main chain, generating a debranched limit dextrin. This chain is Glycogen debranching enzyme, found in Escherichia coli O1:K1 / APEC.